The chain runs to 676 residues: Pescadillo homolog (676 aa).

Residues 277 to 296 (TIEGSNKQSNNSSNQEVSRD) are disordered. The span at 281–291 (SNKQSNNSSNQ) shows a compositional bias: low complexity. One can recognise a BRCT domain in the interval 351–467 (EAGALFAPFT…KLLRPDLYAP (117 aa)). The segment at 471–676 (LPPHLSPWVK…RRKLEKTGEK (206 aa)) is disordered. Residues 494-519 (EQEEEGEAEMAGEEEEEESDEEMEEA) are compositionally biased toward acidic residues. A compositionally biased stretch (basic and acidic residues) spans 520 to 531 (PETKKADAKADE). 2 stretches are compositionally biased toward acidic residues: residues 532–541 (SESEDEDESV) and 548–581 (ADSD…DEEE). Positions 571–676 (EAASESEDEE…RRKLEKTGEK (106 aa)) form a coiled coil. Residues 582–592 (AARTQHQKELE) show a composition bias toward basic and acidic residues. Over residues 611–624 (KKKSSQAKKIAAKK) the composition is skewed to basic residues. The segment covering 625 to 635 (RKEEEELERQK) has biased composition (basic and acidic residues).

The protein belongs to the pescadillo family. As to quaternary structure, component of the NOP7 complex, composed of erb1, nop7 and ytm1. The complex is held together by erb1, which interacts with nop7 via its N-terminal domain and with ytm1 via a high-affinity interaction between the seven-bladed beta-propeller domains of the 2 proteins. The NOP7 complex associates with the 66S pre-ribosome.

It localises to the nucleus. The protein resides in the nucleolus. The protein localises to the nucleoplasm. Its function is as follows. Component of the NOP7 complex, which is required for maturation of the 25S and 5.8S ribosomal RNAs and formation of the 60S ribosome. This is Pescadillo homolog (nop7) from Aspergillus terreus (strain NIH 2624 / FGSC A1156).